Here is a 535-residue protein sequence, read N- to C-terminus: Flavin-containing monooxygenase 2 (535 aa).

Alanine 2 is modified (N-acetylalanine). FAD-binding positions include 9–13 (GAGVS), glutamate 32, 40–41 (VW), and 61–62 (NT). NADP(+)-binding positions include 60 to 61 (TN) and 195 to 198 (SGSD). A Glycyl lysine isopeptide (Lys-Gly) (interchain with G-Cter in SUMO) cross-link involves residue lysine 492. A helical transmembrane segment spans residues 510-530 (FSVSFLLKILGLLAVVVAFFC).

This sequence belongs to the FMO family. FAD serves as cofactor. It depends on Mg(2+) as a cofactor. Expressed in lung (at protein level). Expressed predominantly in lung, and at a much lesser extent in kidney. Also expressed in fetal lung, but not in liver, kidney and brain.

The protein resides in the microsome membrane. It localises to the endoplasmic reticulum membrane. In terms of biological role, catalyzes the oxidative metabolism of numerous xenobiotics, including mainly therapeutic drugs and insecticides that contain a soft nucleophile, most commonly nitrogen and sulfur and participates to their bioactivation. Specifically catalyzes S-oxygenation of sulfur derived compounds such as thioureas-derived compounds, thioetherorganophosphates to their sulfenic acid. In vitro, catalyzes S-oxygenation of the second-line antitubercular drugs thiacetazone (TAZ) and ethionamide (ETA), forming a sulfinic acid and a carbodiimide via a postulated sulfenic acid intermediate. Also catalyzes S-oxygenation of the thioether-containing organophosphate insecticides, phorate and disulfoton. The protein is Flavin-containing monooxygenase 2 of Homo sapiens (Human).